A 727-amino-acid polypeptide reads, in one-letter code: Polyphosphate kinase (727 aa).

Residue N82 coordinates ATP. Mg(2+)-binding residues include R412 and R442. Residue H472 is the Phosphohistidine intermediate of the active site. The ATP site is built by Y505, R601, and H629.

The protein belongs to the polyphosphate kinase 1 (PPK1) family. Requires Mg(2+) as cofactor. An intermediate of this reaction is the autophosphorylated ppk in which a phosphate is covalently linked to a histidine residue through a N-P bond.

It carries out the reaction [phosphate](n) + ATP = [phosphate](n+1) + ADP. Catalyzes the reversible transfer of the terminal phosphate of ATP to form a long-chain polyphosphate (polyP). The protein is Polyphosphate kinase of Pseudomonas putida (strain ATCC 47054 / DSM 6125 / CFBP 8728 / NCIMB 11950 / KT2440).